The chain runs to 319 residues: Large ribosomal subunit protein uL10 (319 aa).

Low complexity predominate over residues 286–295 (ADSGAAAPSA). A disordered region spans residues 286 to 319 (ADSGAAAPSAAKEEEKKEEPEEESDGDLGMSLFD).

This sequence belongs to the universal ribosomal protein uL10 family. P0 forms a pentameric complex by interaction with dimers of P1 and P2. Interacts with NSF. Post-translationally, phosphorylated. In terms of tissue distribution, highly expressed in stems, inflorescences and immature seeds (at protein level). Expressed in leaves and mature seeds (at protein level).

Its function is as follows. Ribosomal protein P0 is the functional equivalent of E.coli protein L10. The polypeptide is Large ribosomal subunit protein uL10 (Oryza sativa subsp. japonica (Rice)).